A 366-amino-acid chain; its full sequence is Endophilin-B1 (366 aa).

Positions 1–30 are membrane-binding amphipathic helix; that stretch reads MNIMDFNMKKLAADAGTFLSRAVQFTEEKL. Residues 1 to 37 form a required for membrane binding region; the sequence is MNIMDFNMKKLAADAGTFLSRAVQFTEEKLGQAEKTE. Residues 27-261 enclose the BAR domain; the sequence is EEKLGQAEKT…LGSFPSTFLS (235 aa). Coiled-coil stretches lie at residues 34–54 and 160–185; these read EKTE…CTKQ and KERK…AKVA. Positions 306 to 366 constitute an SH3 domain; it reads SGSRKARVLY…VPITYLELLN (61 aa).

The protein belongs to the endophilin family. Homodimer, and heterodimer with SH3GLB2. Binds BAX. Binds DNM1, HTT, AMPH, BIN1 and ARFGAP1.

It localises to the cytoplasm. Its subcellular location is the golgi apparatus membrane. The protein localises to the mitochondrion outer membrane. Its function is as follows. May be required for normal outer mitochondrial membrane dynamics. Required for coatomer-mediated retrograde transport in certain cells. May recruit other proteins to membranes with high curvature. May promote membrane fusion. This Gallus gallus (Chicken) protein is Endophilin-B1.